The sequence spans 246 residues: DNA repair protein RecO (246 aa).

This sequence belongs to the RecO family.

Its function is as follows. Involved in DNA repair and RecF pathway recombination. This chain is DNA repair protein RecO, found in Proteus mirabilis (strain HI4320).